We begin with the raw amino-acid sequence, 314 residues long: MPLGLRGKKKAAKSKETARLVEGERSGGSQGVPGPPAPARRLVFHAQLAHGSATGRVEDFSSISELYAKIAGVFEIAPSEILFCTLNTPKIDMGKLLGGQLGLEDFIFAHVKGIKKEVNVYKSEDSLGLTITDNGVGYAFIKRIKDGSTIDSVKTICVGDHIECINGENIVGWRHFEVAKKLKELKKEELFTLQLIEPKKAFEIGPRSKAGKTSTEKIGTSRGTLRLRSKGPATVEDLPSEAKAKAIEKVDDLLELYMGIRDIDLATTMFEAGKDKSNPDEFAVALDETLGDFAFPDEFMFDVWGAISDVKQGR.

A compositionally biased stretch (basic residues) spans 1-12 (MPLGLRGKKKAA). Positions 1–36 (MPLGLRGKKKAAKSKETARLVEGERSGGSQGVPGPP) are disordered. The span at 13 to 25 (KSKETARLVEGER) shows a compositional bias: basic and acidic residues. A PDZ domain is found at 117–197 (EVNVYKSEDS…EELFTLQLIE (81 aa)).

Belongs to the GIPC family. Probably interacts with SEMA5A.

The protein localises to the cytoplasm. In Rattus norvegicus (Rat), this protein is PDZ domain-containing protein GIPC2 (Gipc2).